A 244-amino-acid chain; its full sequence is Adenosylcobinamide-GDP ribazoletransferase (244 aa).

5 consecutive transmembrane segments (helical) span residues 31-51 (LLCYPLVGLLFGLLLWLASHL), 55-75 (APAPLHAALLLTLWVLLSGAL), 109-129 (IAVVTLVLVLLLKFCALWVLV), 133-153 (AGALLVLAPVVGRAAMLGLFL), and 188-208 (LLLGGWSAIWPMALALGVFLW).

The protein belongs to the CobS family. Mg(2+) serves as cofactor.

The protein resides in the cell inner membrane. The enzyme catalyses alpha-ribazole + adenosylcob(III)inamide-GDP = adenosylcob(III)alamin + GMP + H(+). It carries out the reaction alpha-ribazole 5'-phosphate + adenosylcob(III)inamide-GDP = adenosylcob(III)alamin 5'-phosphate + GMP + H(+). Its pathway is cofactor biosynthesis; adenosylcobalamin biosynthesis; adenosylcobalamin from cob(II)yrinate a,c-diamide: step 7/7. Joins adenosylcobinamide-GDP and alpha-ribazole to generate adenosylcobalamin (Ado-cobalamin). Also synthesizes adenosylcobalamin 5'-phosphate from adenosylcobinamide-GDP and alpha-ribazole 5'-phosphate. This Pseudomonas putida (strain W619) protein is Adenosylcobinamide-GDP ribazoletransferase.